The following is a 439-amino-acid chain: Acyl-coenzyme A thioesterase 9, mitochondrial (439 aa).

The N-terminal 21 residues, 1 to 21, are a transit peptide targeting the mitochondrion; that stretch reads MRRAALRLCALGKGQLTPGRG. HotDog ACOT-type domains lie at 84-209 and 289-401; these read KDSY…RDSE and ENSK…EKEV. Lys103 is modified (N6-acetyllysine).

Belongs to the acyl coenzyme A hydrolase family. In terms of assembly, interacts with NYAP1, NYAP2 and MYO16.

It localises to the mitochondrion. The protein resides in the mitochondrion matrix. It is found in the mitochondrion inner membrane. The enzyme catalyses butanoyl-CoA + H2O = butanoate + CoA + H(+). It catalyses the reaction propanoyl-CoA + H2O = propanoate + CoA + H(+). The catalysed reaction is hexadecanoyl-CoA + H2O = hexadecanoate + CoA + H(+). It carries out the reaction octanoyl-CoA + H2O = octanoate + CoA + H(+). The enzyme catalyses decanoyl-CoA + H2O = decanoate + CoA + H(+). It catalyses the reaction tetradecanoyl-CoA + H2O = tetradecanoate + CoA + H(+). The catalysed reaction is 4,8-dimethylnonanoyl-CoA + H2O = 4,8-dimethylnonanoate + CoA + H(+). It carries out the reaction 3-methylbutanoyl-CoA + H2O = 3-methylbutanoate + CoA + H(+). The enzyme catalyses 2-methylpropanoyl-CoA + H2O = 2-methylpropanoate + CoA + H(+). It participates in lipid metabolism; fatty acid metabolism. Its activity is regulated as follows. Strongly inhibited by NADH and CoA. In terms of biological role, mitochondrial acyl-CoA thioesterase. Catalyzes the hydrolysis of acyl-CoAs into free fatty acids and coenzyme A (CoA), regulating their respective intracellular levels. Regulates both mitochondrial lipid and amino acid metabolism. This Homo sapiens (Human) protein is Acyl-coenzyme A thioesterase 9, mitochondrial.